The primary structure comprises 77 residues: Small ribosomal subunit protein uS17 (77 aa).

The protein belongs to the universal ribosomal protein uS17 family. As to quaternary structure, part of the 30S ribosomal subunit.

Functionally, one of the primary rRNA binding proteins, it binds specifically to the 5'-end of 16S ribosomal RNA. The chain is Small ribosomal subunit protein uS17 from Anaplasma marginale (strain St. Maries).